We begin with the raw amino-acid sequence, 117 residues long: Probable non-functional immunoglobulin heavy variable 3-16 (117 aa).

The first 19 residues, Met-1 to Cys-19, serve as a signal peptide directing secretion. The segment at Glu-20 to Ser-44 is framework-1. Positions Val-21–Arg-117 constitute an Ig-like domain. The cysteines at positions 41 and 115 are disulfide-linked. The interval Gly-45 to Asp-52 is complementarity-determining-1. Residues Met-53–Gly-69 form a framework-2 region. The tract at residues Val-70–Thr-77 is complementarity-determining-2. A glycan (N-linked (GlcNAc...) asparagine) is linked at Asn-73. A framework-3 region spans residues His-78–Cys-115. A complementarity-determining-3 region spans residues Val-116–Arg-117.

As to quaternary structure, immunoglobulins are composed of two identical heavy chains and two identical light chains; disulfide-linked.

It localises to the secreted. It is found in the cell membrane. In terms of biological role, probable non-functional open reading frame (ORF) of V region of the variable domain of immunoglobulin heavy chains. Non-functional ORF generally cannot participate in the synthesis of a productive immunoglobulin chain due to altered V-(D)-J or switch recombination and/or splicing site (at mRNA level) and/or conserved amino acid change (protein level). Immunoglobulins, also known as antibodies, are membrane-bound or secreted glycoproteins produced by B lymphocytes. In the recognition phase of humoral immunity, the membrane-bound immunoglobulins serve as receptors which, upon binding of a specific antigen, trigger the clonal expansion and differentiation of B lymphocytes into immunoglobulins-secreting plasma cells. Secreted immunoglobulins mediate the effector phase of humoral immunity, which results in the elimination of bound antigens. The antigen binding site is formed by the variable domain of one heavy chain, together with that of its associated light chain. Thus, each immunoglobulin has two antigen binding sites with remarkable affinity for a particular antigen. The variable domains are assembled by a process called V-(D)-J rearrangement and can then be subjected to somatic hypermutations which, after exposure to antigen and selection, allow affinity maturation for a particular antigen. The protein is Probable non-functional immunoglobulin heavy variable 3-16 of Homo sapiens (Human).